The following is a 178-amino-acid chain: Putative adenylate kinase (178 aa).

Glycine 10, glycine 12, lysine 13, serine 14, and serine 15 together coordinate ATP. An NMP region spans residues 29–50 (TVVELAEKHGCIIDEEDGEIVI). Residues 94-104 (GRNWSEEKLLE) are LID. Residue arginine 95 coordinates ATP.

This sequence belongs to the adenylate kinase family. AK6 subfamily. In terms of assembly, interacts with uS11. Not a structural component of 40S pre-ribosomes, but transiently interacts with them by binding to uS11.

It catalyses the reaction AMP + ATP = 2 ADP. It carries out the reaction ATP + H2O = ADP + phosphate + H(+). In terms of biological role, broad-specificity nucleoside monophosphate (NMP) kinase that catalyzes the reversible transfer of the terminal phosphate group between nucleoside triphosphates and monophosphates. Also has ATPase activity. Involved in the late maturation steps of the 30S ribosomal particles, specifically 16S rRNA maturation. While NMP activity is not required for ribosome maturation, ATPase activity is. Associates transiently with small ribosomal subunit protein uS11. ATP hydrolysis breaks the interaction with uS11. May temporarily remove uS11 from the ribosome to enable a conformational change of the ribosomal RNA that is needed for the final maturation step of the small ribosomal subunit. This is Putative adenylate kinase from Archaeoglobus fulgidus (strain ATCC 49558 / DSM 4304 / JCM 9628 / NBRC 100126 / VC-16).